Here is a 31-residue protein sequence, read N- to C-terminus: VFCRFNGQQCTSDGQCCYGKCRTAFMGKICM.

3 disulfide bridges follow: Cys-3–Cys-17, Cys-10–Cys-21, and Cys-16–Cys-30.

Expressed by the venom gland.

It localises to the secreted. Acts as a neurotoxin. The chain is U13-ctenitoxin-Pn1b from Phoneutria nigriventer (Brazilian armed spider).